A 245-amino-acid chain; its full sequence is Zinc import ATP-binding protein ZnuC (245 aa).

Positions 27–244 (LTADSLTLFY…AKFLSVFPNN (218 aa)) constitute an ABC transporter domain. Residue 59-66 (GPNGGGKT) coordinates ATP.

This sequence belongs to the ABC transporter superfamily. Zinc importer (TC 3.A.1.15.5) family. The complex is composed of two ATP-binding proteins (ZnuC), two transmembrane proteins (ZnuB) and a solute-binding protein (ZnuA).

The protein resides in the cell inner membrane. The enzyme catalyses Zn(2+)(out) + ATP(in) + H2O(in) = Zn(2+)(in) + ADP(in) + phosphate(in) + H(+)(in). Part of the ABC transporter complex ZnuABC involved in zinc import. Responsible for energy coupling to the transport system. The polypeptide is Zinc import ATP-binding protein ZnuC (Anaplasma marginale (strain St. Maries)).